The sequence spans 351 residues: Quinolinate phosphoribosyltransferase [decarboxylating] 2a, mitochondrial (351 aa).

Substrate contacts are provided by residues Arg-142, 173-175, Arg-197, Lys-207, Glu-240, Asp-267, 299-301, and 320-322; these read TRK, SGN, and SGA.

This sequence belongs to the NadC/ModD family. In terms of tissue distribution, expressed in roots and flowers.

It localises to the mitochondrion. It catalyses the reaction nicotinate beta-D-ribonucleotide + CO2 + diphosphate = quinolinate + 5-phospho-alpha-D-ribose 1-diphosphate + 2 H(+). The protein operates within alkaloid biosynthesis; nicotine biosynthesis. Its pathway is cofactor biosynthesis; NAD(+) biosynthesis; nicotinate D-ribonucleotide from quinolinate: step 1/1. In terms of biological role, involved in the biosynthesis of pyridine alkaloid natural products, leading mainly to the production of anabasine, anatabine, nicotine and nornicotine, effective deterrents against herbivores with antiparasitic and pesticide properties (neurotoxins); nornicotine serves as the precursor in the synthesis of the carcinogen compound N'-nitrosonornicotine (NNN). Involved in the catabolism of quinolinic acid (QA). The sequence is that of Quinolinate phosphoribosyltransferase [decarboxylating] 2a, mitochondrial from Nicotiana tabacum (Common tobacco).